We begin with the raw amino-acid sequence, 264 residues long: Thymidylate synthase (264 aa).

DUMP is bound by residues arginine 21 and 126–127; that span reads RR. The active-site Nucleophile is cysteine 146. Residues 166-169, asparagine 177, and 207-209 contribute to the dUMP site; these read RSAD and HLY. Aspartate 169 contributes to the (6R)-5,10-methylene-5,6,7,8-tetrahydrofolate binding site. Residue alanine 263 coordinates (6R)-5,10-methylene-5,6,7,8-tetrahydrofolate.

Belongs to the thymidylate synthase family. Bacterial-type ThyA subfamily. Homodimer.

The protein localises to the cytoplasm. It carries out the reaction dUMP + (6R)-5,10-methylene-5,6,7,8-tetrahydrofolate = 7,8-dihydrofolate + dTMP. Its pathway is pyrimidine metabolism; dTTP biosynthesis. Functionally, catalyzes the reductive methylation of 2'-deoxyuridine-5'-monophosphate (dUMP) to 2'-deoxythymidine-5'-monophosphate (dTMP) while utilizing 5,10-methylenetetrahydrofolate (mTHF) as the methyl donor and reductant in the reaction, yielding dihydrofolate (DHF) as a by-product. This enzymatic reaction provides an intracellular de novo source of dTMP, an essential precursor for DNA biosynthesis. The sequence is that of Thymidylate synthase from Halorhodospira halophila (strain DSM 244 / SL1) (Ectothiorhodospira halophila (strain DSM 244 / SL1)).